A 314-amino-acid chain; its full sequence is uncharacterized protein (314 aa).

The first 20 residues, 1 to 20 (MKKRAGIWAALLLAAVMLAG), serve as a signal peptide directing secretion. Cys21 carries the N-palmitoyl cysteine lipid modification. Cys21 is lipidated: S-diacylglycerol cysteine. Positions 59-311 (KIVSLMPSNT…ELAESIYPDT (253 aa)) constitute a Fe/B12 periplasmic-binding domain.

It belongs to the bacterial solute-binding protein 8 family. As to quaternary structure, the complex is composed of two ATP-binding proteins (YvrA), two transmembrane proteins (YvrB) and a solute-binding protein (YvrC).

It is found in the cell membrane. Functionally, probably part of an ABC transporter complex. This is an uncharacterized protein from Bacillus subtilis (strain 168).